The sequence spans 500 residues: Cytochrome P450 2D16 (500 aa).

Ser249 carries the phosphoserine modification. Cys446 is a heme binding site.

Belongs to the cytochrome P450 family. Heme serves as cofactor. As to expression, expressed at high levels in the inner zone of the adrenal cortex.

The protein resides in the endoplasmic reticulum membrane. Its subcellular location is the microsome membrane. It catalyses the reaction an organic molecule + reduced [NADPH--hemoprotein reductase] + O2 = an alcohol + oxidized [NADPH--hemoprotein reductase] + H2O + H(+). In terms of biological role, cytochromes P450 are a group of heme-thiolate monooxygenases. In liver microsomes, this enzyme is involved in an NADPH-dependent electron transport pathway. It oxidizes a variety of structurally unrelated compounds, including steroids, fatty acids, and xenobiotics. In Cavia porcellus (Guinea pig), this protein is Cytochrome P450 2D16 (CYP2D16).